Reading from the N-terminus, the 297-residue chain is tRNA pseudouridine synthase A (297 aa).

Residue aspartate 72 is the Nucleophile of the active site. Tyrosine 144 is a substrate binding site.

It belongs to the tRNA pseudouridine synthase TruA family. As to quaternary structure, homodimer.

It catalyses the reaction uridine(38/39/40) in tRNA = pseudouridine(38/39/40) in tRNA. In terms of biological role, formation of pseudouridine at positions 38, 39 and 40 in the anticodon stem and loop of transfer RNAs. This is tRNA pseudouridine synthase A from Mycobacterium bovis (strain ATCC BAA-935 / AF2122/97).